A 1059-amino-acid chain; its full sequence is Isoleucine--tRNA ligase (1059 aa).

Positions 59 to 69 (PFANGLPHYGH) match the 'HIGH' region motif. A 'KMSKS' region motif is present at residues 637-641 (KMSKS). An ATP-binding site is contributed by K640.

The protein belongs to the class-I aminoacyl-tRNA synthetase family. IleS type 2 subfamily. Monomer. Requires Zn(2+) as cofactor.

Its subcellular location is the cytoplasm. The enzyme catalyses tRNA(Ile) + L-isoleucine + ATP = L-isoleucyl-tRNA(Ile) + AMP + diphosphate. Its function is as follows. Catalyzes the attachment of isoleucine to tRNA(Ile). As IleRS can inadvertently accommodate and process structurally similar amino acids such as valine, to avoid such errors it has two additional distinct tRNA(Ile)-dependent editing activities. One activity is designated as 'pretransfer' editing and involves the hydrolysis of activated Val-AMP. The other activity is designated 'posttransfer' editing and involves deacylation of mischarged Val-tRNA(Ile). The chain is Isoleucine--tRNA ligase from Mycobacterium leprae (strain TN).